A 57-amino-acid polypeptide reads, in one-letter code: UPF0391 membrane protein RPE_2138 (57 aa).

Transmembrane regions (helical) follow at residues 4–24 (WVVTFLVVALIAGILGFGGIA) and 30–50 (IAKIIFFIAVVLFLVSAVIGL).

The protein belongs to the UPF0391 family.

It is found in the cell membrane. The protein is UPF0391 membrane protein RPE_2138 of Rhodopseudomonas palustris (strain BisA53).